The chain runs to 161 residues: Small heat shock protein hspJ (161 aa).

Positions 52 to 161 constitute a sHSP domain; the sequence is SKFTSLNPKL…FEKEIKINIE (110 aa).

This sequence belongs to the small heat shock protein (HSP20) family.

This chain is Small heat shock protein hspJ (hspJ), found in Dictyostelium discoideum (Social amoeba).